A 198-amino-acid chain; its full sequence is Large ribosomal subunit protein bL27c (198 aa).

The transit peptide at 1–58 (MAMATSMSLNLIGAFKGLSLSSTSSFLRGDLSFSPKTSFTVTLPLENLQAPIPLTIES) directs the protein to the chloroplast.

Belongs to the bacterial ribosomal protein bL27 family. As to quaternary structure, part of the 50S ribosomal subunit.

Its subcellular location is the plastid. The protein resides in the chloroplast. This is Large ribosomal subunit protein bL27c (RPL27) from Arabidopsis thaliana (Mouse-ear cress).